Consider the following 152-residue polypeptide: Pleckstrin homology-like domain family A member 2 (152 aa).

Phosphoserine occurs at positions 3 and 42. The 93-residue stretch at 7-99 (VLREGELEKR…WNAAIALALI (93 aa)) folds into the PH domain. Residues 112-152 (SRQERTAPAAPAEDAVAAAAAAPSEPSEPSRPSPQPKPRTP) are disordered. Over residues 118–138 (APAAPAEDAVAAAAAAPSEPS) the composition is skewed to low complexity. Pro residues predominate over residues 140 to 152 (PSRPSPQPKPRTP). S141 and S144 each carry phosphoserine. T151 is modified (phosphothreonine).

The protein belongs to the PHLDA2 family. Expressed in placenta and adult prostate gland. In placenta, it is present in all cells of the villous cytotrophoblast. The protein is absent in cells from hydatidiform moles. Hydatidiform mole is a gestation characterized by abnormal development of both fetus and trophoblast. The majority of hydatidiform moles are associated with an excess of paternal to maternal genomes and are likely to result from the abnormal expression of imprinted genes (at protein level). Expressed at low levels in adult liver and lung, and fetal liver. Expressed in adult brain and neuroblastoma, medullablastoma and glioblastoma cell lines.

Its subcellular location is the cytoplasm. It localises to the membrane. Functionally, plays a role in regulating placenta growth. May act via its PH domain that competes with other PH domain-containing proteins, thereby preventing their binding to membrane lipids. This is Pleckstrin homology-like domain family A member 2 (PHLDA2) from Homo sapiens (Human).